A 689-amino-acid chain; its full sequence is MNQRPIQTATLSWNEQGTPVSEQFGDIYFSNEDGLEETHHVFLKGNGFPARFASHPQQSCIFAETGFGTGLNFLTLWRDFALFRQQSPNATLRRLHYISFEKYPLHVADLASAHARWPELASFAEQLRAQWPLPLAGCHRILLADGAITLDLWFGDVNTLLPTLDDSLNNQVDAWFLDGFAPAKNPDMWNEQLFNAMARMTRPGGTFSTFTAAGFVRRGLQQAGFNVTKVKGFGQKREMLTGTLPQQIHAPTAPWYHRPAATRCDDIAIIGGGIVSALTALALQRRGAVVTLYCADAQPAQGASGNRQGALYPLLNGKNDALETFFTSAFTFARRQYDQLLEQGIAFDHQWCGVSQLAFDDKSRGKIEKMLHTQWPVEFAEAMSREQLSELAGLDCAHDGIHYPAGGWLCPSDLTHALMMLAQQNGMTCHYQHELQRLKRIDSQWQLTFGQSQAAKHHATVILATGHRLPEWEQTHHLPLSAVRGQVSHIPTTPVLSQLQQVLCYDGYLTPVNPANQHHCIGASYQRGDIATDFRLTEQQENRERLLRCLPQVSWPQQVDVSDNQARCGVRCAIRDHLPMVGAVPDYAATLAQYQDLSRRIQHGGESEVNDIAVAPVWPELFMVGGLGSRGLCSAPLVAEILAAQMFGEPLPLDAKTLAALNPNRFWIRKLLKGRPVQTRSPATQESSR.

The segment at 1-245 (MNQRPIQTAT…KREMLTGTLP (245 aa)) is tRNA (mnm(5)s(2)U34)-methyltransferase. An FAD-dependent cmnm(5)s(2)U34 oxidoreductase region spans residues 270–689 (IGGGIVSALT…RSPATQESSR (420 aa)).

In the N-terminal section; belongs to the methyltransferase superfamily. tRNA (mnm(5)s(2)U34)-methyltransferase family. The protein in the C-terminal section; belongs to the DAO family. The cofactor is FAD.

It is found in the cytoplasm. The catalysed reaction is 5-aminomethyl-2-thiouridine(34) in tRNA + S-adenosyl-L-methionine = 5-methylaminomethyl-2-thiouridine(34) in tRNA + S-adenosyl-L-homocysteine + H(+). Functionally, catalyzes the last two steps in the biosynthesis of 5-methylaminomethyl-2-thiouridine (mnm(5)s(2)U) at the wobble position (U34) in tRNA. Catalyzes the FAD-dependent demodification of cmnm(5)s(2)U34 to nm(5)s(2)U34, followed by the transfer of a methyl group from S-adenosyl-L-methionine to nm(5)s(2)U34, to form mnm(5)s(2)U34. The sequence is that of tRNA 5-methylaminomethyl-2-thiouridine biosynthesis bifunctional protein MnmC from Yersinia pestis.